The chain runs to 493 residues: Ketol-acid reductoisomerase (NADP(+)) (493 aa).

The 194-residue stretch at 15-208 folds into the KARI N-terminal Rossmann domain; it reads AQLGKCRFMQ…GGDRAGVLES (194 aa). NADP(+) contacts are provided by residues 45-48, Arg-68, Arg-76, Ser-78, and 108-110; these read CGAQ and DKQ. His-132 is a catalytic residue. Gly-158 contributes to the NADP(+) binding site. KARI C-terminal knotted domains follow at residues 209–344 and 345–486; these read SFVA…NAPA and FAGK…MKDM. Residues Asp-217, Glu-221, Glu-389, and Glu-393 each coordinate Mg(2+). Ser-414 serves as a coordination point for substrate.

The protein belongs to the ketol-acid reductoisomerase family. Mg(2+) serves as cofactor.

It catalyses the reaction (2R)-2,3-dihydroxy-3-methylbutanoate + NADP(+) = (2S)-2-acetolactate + NADPH + H(+). The enzyme catalyses (2R,3R)-2,3-dihydroxy-3-methylpentanoate + NADP(+) = (S)-2-ethyl-2-hydroxy-3-oxobutanoate + NADPH + H(+). It functions in the pathway amino-acid biosynthesis; L-isoleucine biosynthesis; L-isoleucine from 2-oxobutanoate: step 2/4. The protein operates within amino-acid biosynthesis; L-valine biosynthesis; L-valine from pyruvate: step 2/4. Involved in the biosynthesis of branched-chain amino acids (BCAA). Catalyzes an alkyl-migration followed by a ketol-acid reduction of (S)-2-acetolactate (S2AL) to yield (R)-2,3-dihydroxy-isovalerate. In the isomerase reaction, S2AL is rearranged via a Mg-dependent methyl migration to produce 3-hydroxy-3-methyl-2-ketobutyrate (HMKB). In the reductase reaction, this 2-ketoacid undergoes a metal-dependent reduction by NADPH to yield (R)-2,3-dihydroxy-isovalerate. This is Ketol-acid reductoisomerase (NADP(+)) from Aeromonas hydrophila subsp. hydrophila (strain ATCC 7966 / DSM 30187 / BCRC 13018 / CCUG 14551 / JCM 1027 / KCTC 2358 / NCIMB 9240 / NCTC 8049).